Here is an 89-residue protein sequence, read N- to C-terminus: MAKTSKIIKEQKIEETVARYAELRRELKANKDYRALSQLPRNASPTRMHRRDSLDGRPHAYMRKFGMSRLNFRRLAHEGQIPGVRKASW.

The protein belongs to the universal ribosomal protein uS14 family. Part of the 30S ribosomal subunit. Contacts proteins S3 and S10.

Functionally, binds 16S rRNA, required for the assembly of 30S particles and may also be responsible for determining the conformation of the 16S rRNA at the A site. The sequence is that of Small ribosomal subunit protein uS14A from Pediococcus pentosaceus (strain ATCC 25745 / CCUG 21536 / LMG 10740 / 183-1w).